The following is a 504-amino-acid chain: ATP synthase subunit alpha, chloroplastic (504 aa).

ATP is bound at residue Gly-170–Thr-177.

It belongs to the ATPase alpha/beta chains family. In terms of assembly, F-type ATPases have 2 components, CF(1) - the catalytic core - and CF(0) - the membrane proton channel. CF(1) has five subunits: alpha(3), beta(3), gamma(1), delta(1), epsilon(1). CF(0) has four main subunits: a, b, b' and c.

It is found in the plastid. It localises to the chloroplast thylakoid membrane. The enzyme catalyses ATP + H2O + 4 H(+)(in) = ADP + phosphate + 5 H(+)(out). Its function is as follows. Produces ATP from ADP in the presence of a proton gradient across the membrane. The alpha chain is a regulatory subunit. The chain is ATP synthase subunit alpha, chloroplastic from Triticum aestivum (Wheat).